Here is a 75-residue protein sequence, read N- to C-terminus: Beta-defensin 30 (75 aa).

The first 22 residues, 1-22 (MGSLQLILVLFVLLSDVPPVRS), serve as a signal peptide directing secretion. 3 cysteine pairs are disulfide-bonded: C35/C62, C42/C56, and C46/C63.

Belongs to the beta-defensin family.

The protein resides in the secreted. Its function is as follows. Has antibacterial activity. This Rattus norvegicus (Rat) protein is Beta-defensin 30 (Defb30).